The primary structure comprises 363 residues: Type 3 secretion system translocon protein SctB (363 aa).

Residues 99–120 (ISSLSSNAVSLIISVAVLLSAL) form a helical membrane-spanning segment.

It belongs to the SctB/SipC family. As to quaternary structure, the core secretion machinery of the T3SS is composed of approximately 20 different proteins, including cytoplasmic components, a base, an export apparatus and a needle. This subunit is involved in the formation of a pore, called the translocon, in host membrane.

It is found in the secreted. It localises to the host membrane. In terms of biological role, component of the type III secretion system (T3SS), also called injectisome, which is used to inject bacterial effector proteins into eukaryotic host cells. IpaB/SctE and IpaC/SctB are inserted into the host membrane where they form a pore and allow the translocation of effector proteins into the cytosol of target cells. This is Type 3 secretion system translocon protein SctB from Shigella dysenteriae.